A 382-amino-acid polypeptide reads, in one-letter code: uncharacterized protein (382 aa).

12 helical membrane passes run 14–34 (GLLL…LWLA), 45–65 (MVSS…GYLI), 75–95 (YLAS…VGFW), 102–122 (FIAG…LMCS), 131–151 (LLAA…LLVS), 157–177 (LLHV…PLLF), 204–224 (LGVN…GLMP), 235–255 (ASIG…QWPV), 265–284 (LLVL…VMLT), 289–311 (APAL…AWAC), 325–345 (ALLL…AMLM), and 349–369 (SDNL…LMLL).

It belongs to the major facilitator superfamily. YcaD (TC 2.A.1.26) family.

It is found in the cell inner membrane. This is an uncharacterized protein from Salmonella arizonae (strain ATCC BAA-731 / CDC346-86 / RSK2980).